Reading from the N-terminus, the 345-residue chain is Trace amine-associated receptor 6 (345 aa).

The Extracellular segment spans residues 1–32; sequence MSSNSSLLVAVQLCYANVNGSCVKIPFSPGSR. N-linked (GlcNAc...) asparagine glycans are attached at residues Asn4 and Asn19. 2 cysteine pairs are disulfide-bonded: Cys22-Cys186 and Cys105-Cys190. Residues 33–53 form a helical membrane-spanning segment; sequence VILYIVFGFGAVLAVFGNLLV. The Cytoplasmic segment spans residues 54-68; that stretch reads MISILHFKQLHSPTN. A helical transmembrane segment spans residues 69–89; sequence FLVASLACADFLVGVTVMPFS. Over 90 to 107 the chain is Extracellular; sequence MVRTVESCWYFGRSFCTF. Residues 108–128 traverse the membrane as a helical segment; sequence HTCCDVAFCYSSLFHLCFISI. The Cytoplasmic segment spans residues 129 to 147; that stretch reads DRYIAVTDPLVYPTKFTVS. A helical transmembrane segment spans residues 148-168; that stretch reads VSGICISVSWILPLMYSGAVF. The Extracellular portion of the chain corresponds to 169-202; sequence YTGVYDDGLEELSDALNCIGGCQTVVNQNWVLTD. A helical membrane pass occupies residues 203–223; it reads FLSFFIPTFIMIILYGNIFLV. The Cytoplasmic segment spans residues 224-259; sequence ARRQAKKIENTGSKTESSSESYKARVARRERKAAKT. The chain crosses the membrane as a helical span at residues 260–276; sequence LGVTVVAFMISWLPYSI. At 277–282 the chain is on the extracellular side; that stretch reads DSLIDA. A helical membrane pass occupies residues 283 to 302; that stretch reads FMGFITPACIYEICCWCAYY. Over 303–345 the chain is Cytoplasmic; the sequence is NSAMNPLIYALFYPWFRKAIKVIVTGQVLKNSSATMNLFSEHI.

The protein belongs to the G-protein coupled receptor 1 family. Expressed at low abundance in various brain tissues, as well as in fetal liver, but not in the cerebellum or placenta. In the brain, comparable levels of expression in basal ganglia, frontal cortex, substantia nigra, amygdala and hippocampus, highest expression in hippocampus and lowest expression in basal ganglia.

The protein resides in the cell membrane. Functionally, olfactory receptor specific for trace amines, such as beta-phenylethylamine (beta-PEA). Trace amine compounds are enriched in animal body fluids and act on trace amine-associated receptors (TAARs) to elicit both intraspecific and interspecific innate behaviors. Beta-PEA-binding causes a conformation change that triggers signaling via G(s)-class of G alpha proteins (GNAL or GNAS). The chain is Trace amine-associated receptor 6 from Homo sapiens (Human).